The primary structure comprises 358 residues: Nicotinate-nucleotide--dimethylbenzimidazole phosphoribosyltransferase (358 aa).

Glu313 acts as the Proton acceptor in catalysis.

It belongs to the CobT family.

The catalysed reaction is 5,6-dimethylbenzimidazole + nicotinate beta-D-ribonucleotide = alpha-ribazole 5'-phosphate + nicotinate + H(+). The protein operates within nucleoside biosynthesis; alpha-ribazole biosynthesis; alpha-ribazole from 5,6-dimethylbenzimidazole: step 1/2. Its function is as follows. Catalyzes the synthesis of alpha-ribazole-5'-phosphate from nicotinate mononucleotide (NAMN) and 5,6-dimethylbenzimidazole (DMB). The chain is Nicotinate-nucleotide--dimethylbenzimidazole phosphoribosyltransferase from Corynebacterium glutamicum (strain R).